Reading from the N-terminus, the 320-residue chain is Transmembrane protein 41 homolog (320 aa).

The interval 20-72 is disordered; that stretch reads GRAKALQEHSPDQVATPLLPQVPPQEQQDLNPQQQQQQQQQQQATPQKQAMSA. Residues 43 to 68 are compositionally biased toward low complexity; that stretch reads PQEQQDLNPQQQQQQQQQQQATPQKQ. 6 helical membrane passes run 83–103, 141–161, 173–195, 225–242, 245–265, and 289–309; these read VIVA…YAIF, VMFG…PGSL, FPIA…YTLS, LFNY…PNWF, LASP…FCGV, and FSWT…LPGL.

The protein belongs to the TMEM41 family. In embryos, strongly expressed in the nervous system.

It is found in the membrane. In terms of biological role, required in cholinergic neurons, but not in motor neurons, for normal neurotransmitter release by motor neurons. Involved in muscle growth. The chain is Transmembrane protein 41 homolog (stas) from Drosophila melanogaster (Fruit fly).